We begin with the raw amino-acid sequence, 495 residues long: MVSEITHKSYPLHFVLFPFMAQGHMIPMVDIARLLAQRGVKITIVTTPHNAARFENVLSRAIESGLPISIVQVKLPSQEAGLPEGNETFDSLVSMELLVPFFKAVNMLEEPVQKLFEEMSPQPSCIISDFCLPYTSKIAKKFNIPKILFHGMCCFCLLCMHVLRKNREILENLKSDKEHFVVPYFPDRVEFTRPQVPMATYVPGEWHEIKEDIVEADKTSYGVIVNTYQELEPAYANDYKEARSGKAWTIGPVSLCNKVGADKAERGNKADIDQDECLKWLDSKEEGSVLYVCLGSICSLPLSQLKELGLGLEESQRPFIWVVRGWEKNKELLEWFSESGFEERVKDRGLLIKGWSPQMLILAHHSVGGFLTHCGWNSTLEGITSGIPLLTWPLFGDQFCNQKLVVQVLKVGVSAGVEEVTNWGEEEKIGVLVDKEGVKKAVEELMGESDDAKERRKRVKELGQLAQKAVEEGGSSHSNITSLLEDIMQLAQSNN.

The active-site Proton acceptor is the His-24. An anthocyanidin is bound at residue His-24. The active-site Charge relay is the Asp-129. UDP-alpha-D-glucose-binding residues include Gln-358, His-373, Trp-376, Asn-377, Ser-378, and Glu-381. Gly-396 provides a ligand contact to an anthocyanidin. The UDP-alpha-D-glucose site is built by Asp-397 and Gln-398.

It belongs to the UDP-glycosyltransferase family.

It catalyses the reaction oleanolate + UDP-alpha-D-glucose = oleanolate 3-O-beta-D-glucoside + UDP + H(+). In terms of biological role, catalyzes the transfer of a glucose (Glc) moiety from UDP-Glc to the C-3 position of the oleanane sapogenins oleanolate and hederagenin, and to the C-28 carboxylic group of the lupane sapogenin betulinate. The monoglucosylated hederagenin 3-O-beta-D-glucoside is a feeding deterrent of the yellow-striped flea beetle (Phyllotreta nemorum). This chain is UDP-glycosyltransferase 73C11, found in Barbarea vulgaris (Yellow rocket).